We begin with the raw amino-acid sequence, 448 residues long: Phosphoglucosamine mutase (448 aa).

The Phosphoserine intermediate role is filled by Ser-100. Mg(2+)-binding residues include Ser-100, Asp-240, Asp-242, and Asp-244. Ser-100 is subject to Phosphoserine.

This sequence belongs to the phosphohexose mutase family. Mg(2+) is required as a cofactor. Activated by phosphorylation.

It catalyses the reaction alpha-D-glucosamine 1-phosphate = D-glucosamine 6-phosphate. Functionally, catalyzes the conversion of glucosamine-6-phosphate to glucosamine-1-phosphate. The protein is Phosphoglucosamine mutase of Geobacillus thermodenitrificans (strain NG80-2).